We begin with the raw amino-acid sequence, 183 residues long: MTCYTPRLLTRYREEIVPVLMSRFDINNVHQVPSITKIVVNSGVGDAARDSKIIEGAVSDITLITGQKPRINRAKQSIAKFKLREGQAVGVTATLRGRRMWEFLDRLLTLALPRIRDFRGISDKQFDGHGNYTFGLSEQGIFHEIDQDKIDRVRGMDITVVTTSSSDDMARALLGELGFPFKK.

This sequence belongs to the universal ribosomal protein uL5 family. In terms of assembly, part of the 50S ribosomal subunit; part of the 5S rRNA/L5/L18/L25 subcomplex. Contacts the 5S rRNA and the P site tRNA. Forms a bridge to the 30S subunit in the 70S ribosome.

Its function is as follows. This is one of the proteins that bind and probably mediate the attachment of the 5S RNA into the large ribosomal subunit, where it forms part of the central protuberance. In the 70S ribosome it contacts protein S13 of the 30S subunit (bridge B1b), connecting the 2 subunits; this bridge is implicated in subunit movement. Contacts the P site tRNA; the 5S rRNA and some of its associated proteins might help stabilize positioning of ribosome-bound tRNAs. The chain is Large ribosomal subunit protein uL5 from Tropheryma whipplei (strain TW08/27) (Whipple's bacillus).